We begin with the raw amino-acid sequence, 283 residues long: 4-hydroxy-3-methylbut-2-enyl diphosphate reductase (283 aa).

Residue Cys12 participates in [4Fe-4S] cluster binding. Residues His40 and His73 each contribute to the (2E)-4-hydroxy-3-methylbut-2-enyl diphosphate site. Residues His40 and His73 each coordinate dimethylallyl diphosphate. His40 and His73 together coordinate isopentenyl diphosphate. Residue Cys95 participates in [4Fe-4S] cluster binding. (2E)-4-hydroxy-3-methylbut-2-enyl diphosphate is bound at residue His123. His123 contacts dimethylallyl diphosphate. His123 serves as a coordination point for isopentenyl diphosphate. The Proton donor role is filled by Glu125. Residue Thr161 participates in (2E)-4-hydroxy-3-methylbut-2-enyl diphosphate binding. Cys189 is a [4Fe-4S] cluster binding site. (2E)-4-hydroxy-3-methylbut-2-enyl diphosphate contacts are provided by Ser217, Asn219, and Ser261. Dimethylallyl diphosphate is bound by residues Ser217, Asn219, and Ser261. Residues Ser217, Asn219, and Ser261 each coordinate isopentenyl diphosphate.

The protein belongs to the IspH family. Requires [4Fe-4S] cluster as cofactor.

The catalysed reaction is isopentenyl diphosphate + 2 oxidized [2Fe-2S]-[ferredoxin] + H2O = (2E)-4-hydroxy-3-methylbut-2-enyl diphosphate + 2 reduced [2Fe-2S]-[ferredoxin] + 2 H(+). It catalyses the reaction dimethylallyl diphosphate + 2 oxidized [2Fe-2S]-[ferredoxin] + H2O = (2E)-4-hydroxy-3-methylbut-2-enyl diphosphate + 2 reduced [2Fe-2S]-[ferredoxin] + 2 H(+). The protein operates within isoprenoid biosynthesis; dimethylallyl diphosphate biosynthesis; dimethylallyl diphosphate from (2E)-4-hydroxy-3-methylbutenyl diphosphate: step 1/1. It functions in the pathway isoprenoid biosynthesis; isopentenyl diphosphate biosynthesis via DXP pathway; isopentenyl diphosphate from 1-deoxy-D-xylulose 5-phosphate: step 6/6. Catalyzes the conversion of 1-hydroxy-2-methyl-2-(E)-butenyl 4-diphosphate (HMBPP) into a mixture of isopentenyl diphosphate (IPP) and dimethylallyl diphosphate (DMAPP). Acts in the terminal step of the DOXP/MEP pathway for isoprenoid precursor biosynthesis. In Citrifermentans bemidjiense (strain ATCC BAA-1014 / DSM 16622 / JCM 12645 / Bem) (Geobacter bemidjiensis), this protein is 4-hydroxy-3-methylbut-2-enyl diphosphate reductase.